The following is a 356-amino-acid chain: Xylose/arabinose import permease protein XylH (356 aa).

The next 10 helical transmembrane spans lie at 14–34, 41–61, 70–90, 96–116, 126–146, 161–181, 211–231, 242–262, 266–286, and 287–307; these read LFLV…AYFS, IFQY…LMLC, ALAN…YQAI, IVVS…MNGL, LITT…YSGG, VSIL…LILL, VKII…IIQG, FTAD…TSLV, GSLV…NGFN, and ILGI…VVVM.

This sequence belongs to the binding-protein-dependent transport system permease family. The complex is composed of two ATP-binding proteins (XylG), two transmembrane proteins (XylH) and a solute-binding protein (XylF).

The protein resides in the cell membrane. Functionally, part of the ABC transporter complex XylFGH involved in the uptake of xylose and arabinose. Responsible for the translocation of the substrate across the membrane. The sequence is that of Xylose/arabinose import permease protein XylH from Sulfolobus acidocaldarius (strain ATCC 33909 / DSM 639 / JCM 8929 / NBRC 15157 / NCIMB 11770).